The following is a 342-amino-acid chain: NLP effector protein Pc107869 (342 aa).

Residues 1–19 (MKTGFFLFAACAALVAVQA) form the signal peptide. N-linked (GlcNAc...) asparagine glycosylation occurs at asparagine 24. The tract at residues 41–125 (APRTKAPPTK…PTPDPGPWEA (85 aa)) is disordered. Over residues 55–75 (QQSSLSGSQEQQQEQIETPAP) the composition is skewed to low complexity. Pro residues predominate over residues 93-121 (TPAPTPAPTPAPTPAPTPAPTPAPTPDPG). Positions 226 to 232 (GHRHDWE) match the Hepta-peptide GHRHDWE motif motif.

This sequence belongs to the Necrosis inducing protein (NPP1) family.

It is found in the secreted. Functionally, secreted effector that contributes strongly to virulence during infection by P.capsici. Induces cell death in the Solanaceae, including Nicotiana benthamiana. The sequence is that of NLP effector protein Pc107869 from Phytophthora capsici.